The primary structure comprises 461 residues: Ribulose bisphosphate carboxylase (461 aa).

N113 is a substrate binding site. The active-site Proton acceptor is K168. K170 is a binding site for substrate. 3 residues coordinate Mg(2+): K193, D195, and E196. Residue K193 is modified to N6-carboxylysine. Catalysis depends on H289, which acts as the Proton acceptor. Residues R290, H323, and S370 each contribute to the substrate site.

The protein belongs to the RuBisCO large chain family. Type II subfamily. In terms of assembly, homodimer. It depends on Mg(2+) as a cofactor.

The enzyme catalyses 2 (2R)-3-phosphoglycerate + 2 H(+) = D-ribulose 1,5-bisphosphate + CO2 + H2O. It carries out the reaction D-ribulose 1,5-bisphosphate + O2 = 2-phosphoglycolate + (2R)-3-phosphoglycerate + 2 H(+). Functionally, ruBisCO catalyzes two reactions: the carboxylation of D-ribulose 1,5-bisphosphate, the primary event in carbon dioxide fixation, as well as the oxidative fragmentation of the pentose substrate. Both reactions occur simultaneously and in competition at the same active site. The polypeptide is Ribulose bisphosphate carboxylase (Thiomonas intermedia (strain K12) (Thiobacillus intermedius)).